A 546-amino-acid chain; its full sequence is MDLLSLITGKKFEKHYSKVGSRFSDESLNGLEKQLSNGADAAIDTTADDRGSVVSLGASLPLSQGRPAKSKNILNDTLLAEDQYLVTWDGPDDPLNPRNWSHSYKWWIVIQVSVITIVVTFASSVYSSGIIDIASELHSSIPVSTLGSCTFLVGFGVGSLPFAPLSDIYGRFIIYFVTLLIFTIFQVGGGCAHNVWTLAIVRFFQGVFGSTPLANAGGTISDLFTPVQRTYVLPGFCTFPYLGPIIGPIIGDFITQSYLEWRWTFWINMIWAAAVIVFVFIFFPETHEDTILDYKAKYLRKTTGNTAYYTIHERERDPKNAMIQAATQAVSLIFTEPIVVCFTLYLTVVYIINYINFEGYPIVFAKYGFNKGEQGLSFIGVGVGIVCAGLCTPFIYWHYLKVNKKRNGVICPEDRLYPLFIGCFLLPISMFWFAWTCYPHHIHWIVPIIASAFFGFSLLIVFFVSYNYIIDSYQHMAPSALAAATLVRYSASGGISMVARPMYLNLGDHWATSVLGFISVAMVPIPFIFYRFGKSIRAWSKNAYKL.

The next 10 membrane-spanning stretches (helical) occupy residues 106-126, 145-165, 172-192, 231-251, 263-283, 332-352, 375-395, 416-436, 444-464, and 510-530; these read WWIV…SSVY, TLGS…FAPL, FIIY…GGCA, YVLP…PIIG, WTFW…FIFF, LIFT…VYII, GLSF…TPFI, LYPL…FAWT, WIVP…VFFV, and WATS…FIFY.

Belongs to the major facilitator superfamily. CAR1 family.

It is found in the endoplasmic reticulum membrane. This is an uncharacterized protein from Schizosaccharomyces pombe (strain 972 / ATCC 24843) (Fission yeast).